Reading from the N-terminus, the 360-residue chain is Phosphate acyltransferase (360 aa).

It belongs to the PlsX family. Homodimer. Probably interacts with PlsY.

The protein resides in the cytoplasm. The catalysed reaction is a fatty acyl-[ACP] + phosphate = an acyl phosphate + holo-[ACP]. It participates in lipid metabolism; phospholipid metabolism. Its function is as follows. Catalyzes the reversible formation of acyl-phosphate (acyl-PO(4)) from acyl-[acyl-carrier-protein] (acyl-ACP). This enzyme utilizes acyl-ACP as fatty acyl donor, but not acyl-CoA. In Thermobifida fusca (strain YX), this protein is Phosphate acyltransferase.